The following is a 390-amino-acid chain: Phosphopentomutase (390 aa).

Mn(2+)-binding residues include Asp-9, Asp-283, His-288, Asp-324, His-325, and His-336.

Belongs to the phosphopentomutase family. Mn(2+) serves as cofactor.

The protein localises to the cytoplasm. The enzyme catalyses 2-deoxy-alpha-D-ribose 1-phosphate = 2-deoxy-D-ribose 5-phosphate. The catalysed reaction is alpha-D-ribose 1-phosphate = D-ribose 5-phosphate. It functions in the pathway carbohydrate degradation; 2-deoxy-D-ribose 1-phosphate degradation; D-glyceraldehyde 3-phosphate and acetaldehyde from 2-deoxy-alpha-D-ribose 1-phosphate: step 1/2. In terms of biological role, isomerase that catalyzes the conversion of deoxy-ribose 1-phosphate (dRib-1-P) and ribose 1-phosphate (Rib-1-P) to deoxy-ribose 5-phosphate (dRib-5-P) and ribose 5-phosphate (Rib-5-P), respectively. The protein is Phosphopentomutase of Thermotoga petrophila (strain ATCC BAA-488 / DSM 13995 / JCM 10881 / RKU-1).